Reading from the N-terminus, the 334-residue chain is N-acetyl-gamma-glutamyl-phosphate reductase (334 aa).

Residue Cys-154 is part of the active site.

It belongs to the NAGSA dehydrogenase family. Type 1 subfamily.

The protein localises to the cytoplasm. The catalysed reaction is N-acetyl-L-glutamate 5-semialdehyde + phosphate + NADP(+) = N-acetyl-L-glutamyl 5-phosphate + NADPH + H(+). It participates in amino-acid biosynthesis; L-arginine biosynthesis; N(2)-acetyl-L-ornithine from L-glutamate: step 3/4. In terms of biological role, catalyzes the NADPH-dependent reduction of N-acetyl-5-glutamyl phosphate to yield N-acetyl-L-glutamate 5-semialdehyde. This is N-acetyl-gamma-glutamyl-phosphate reductase from Vibrio parahaemolyticus serotype O3:K6 (strain RIMD 2210633).